Here is a 240-residue protein sequence, read N- to C-terminus: Probable transcriptional regulatory protein YrbC (240 aa).

This sequence belongs to the TACO1 family.

The protein localises to the cytoplasm. This Bacillus subtilis (strain 168) protein is Probable transcriptional regulatory protein YrbC (yrbC).